The sequence spans 128 residues: Translation initiation factor 5A (128 aa).

A Hypusine modification is found at Lys-35.

Belongs to the eIF-5A family.

Its subcellular location is the cytoplasm. Its function is as follows. Functions by promoting the formation of the first peptide bond. The chain is Translation initiation factor 5A (eif5a) from Archaeoglobus fulgidus (strain ATCC 49558 / DSM 4304 / JCM 9628 / NBRC 100126 / VC-16).